We begin with the raw amino-acid sequence, 102 residues long: Probable endoribonuclease MazF2 (102 aa).

It belongs to the PemK/MazF family. Forms a complex with cognate antitoxin MazE2.

In terms of biological role, toxic component of a type II toxin-antitoxin (TA) system. Acts as an endoribonuclease. Neutralized by coexpression with cognate antitoxin MazE2. The protein is Probable endoribonuclease MazF2 (mazF2) of Mycobacterium tuberculosis (strain CDC 1551 / Oshkosh).